Consider the following 636-residue polypeptide: 1-deoxy-D-xylulose-5-phosphate synthase (636 aa).

Thiamine diphosphate-binding positions include His-75 and 116–118 (AHS). Position 147 (Asp-147) interacts with Mg(2+). Residues 148–149 (GA), Asn-177, Tyr-288, and Glu-370 each bind thiamine diphosphate. Asn-177 serves as a coordination point for Mg(2+).

Belongs to the transketolase family. DXPS subfamily. Homodimer. Mg(2+) is required as a cofactor. The cofactor is thiamine diphosphate.

The catalysed reaction is D-glyceraldehyde 3-phosphate + pyruvate + H(+) = 1-deoxy-D-xylulose 5-phosphate + CO2. It participates in metabolic intermediate biosynthesis; 1-deoxy-D-xylulose 5-phosphate biosynthesis; 1-deoxy-D-xylulose 5-phosphate from D-glyceraldehyde 3-phosphate and pyruvate: step 1/1. Functionally, catalyzes the acyloin condensation reaction between C atoms 2 and 3 of pyruvate and glyceraldehyde 3-phosphate to yield 1-deoxy-D-xylulose-5-phosphate (DXP). This chain is 1-deoxy-D-xylulose-5-phosphate synthase, found in Ralstonia pickettii (strain 12J).